We begin with the raw amino-acid sequence, 435 residues long: T-box transcription factor T (435 aa).

Positions 51 to 219 (LWLRFKELTN…YNPFAKAFLD (169 aa)) form a DNA-binding region, T-box. The interval 279–308 (YPTLRSHRSSPYPSPYAHRNNSPTYSDNSP) is disordered. Residues 297–308 (RNNSPTYSDNSP) show a composition bias toward polar residues.

As to quaternary structure, monomer. Detected in testis, but not in other, normal tissues. Detected in lung tumors (at protein level).

The protein resides in the nucleus. Its function is as follows. Involved in the transcriptional regulation of genes required for mesoderm formation and differentiation. Binds to a palindromic T site 5'-TTCACACCTAGGTGTGAA-3' DNA sequence and activates gene transcription when bound to such a site. The polypeptide is T-box transcription factor T (Homo sapiens (Human)).